The sequence spans 516 residues: Monocarboxylate transporter 12 (516 aa).

Residues 1 to 50 (MPSGSHWTANSSKIITWLLEQPGKEEKRKTMAKVNRARSTSPPDGGWGWM) lie on the Cytoplasmic side of the membrane. A run of 12 helical transmembrane segments spans residues 51-73 (IVAG…SIFF), 88-108 (AWIH…GSVV), 116-136 (VGIM…SFAT), 145-165 (LGVL…AMVG), 178-198 (IAMS…QLLI), 207-227 (LLIL…MRPI), 283-303 (FVVL…LFVY), 319-339 (AFLM…FGWL), 350-370 (YVCY…LPML), 377-397 (VPFS…IPVV), 410-430 (ALGV…PIAG), and 440-460 (TAAF…LGFA). Over 461 to 516 (RLIKRMRKTQLQFIAKESDPKLQLWTNGSVAYSVARELDQKHGEPVATAVPGYSLT) the chain is Cytoplasmic.

Belongs to the major facilitator superfamily. Monocarboxylate porter (TC 2.A.1.13) family. In terms of assembly, interacts with isoform 2 of BSG; this interaction is required for its localization to the plasma membrane. In terms of tissue distribution, most highly expressed in kidney, followed by retina, lung, heart and testis. Very weakly expressed in brain and liver. Also detected in lens.

It is found in the cell membrane. The protein localises to the basolateral cell membrane. The catalysed reaction is creatine(in) = creatine(out). It catalyses the reaction guanidinoacetate(in) = guanidinoacetate(out). Creatine uptake is inhibited by carbonyl cyanide 3-chlorophenylhydrazone (CCCP) and by valinomycin. Functionally, functions as a transporter for creatine and as well for its precursor guanidinoacetate. Transport of creatine and GAA is independent of resting membrane potential and extracellular Na(+), Cl(-), or pH. Contributes to the process of creatine biosynthesis and distribution. The polypeptide is Monocarboxylate transporter 12 (Homo sapiens (Human)).